Consider the following 81-residue polypeptide: Putative chemokine-related protein B42 (81 aa).

Disulfide bonds link cysteine 7–cysteine 73, cysteine 8–cysteine 29, and cysteine 11–cysteine 45.

As to expression, expressed in placenta, heart, lung, liver, pancreas, skeletal muscle and brain.

Its subcellular location is the cytoplasm. The polypeptide is Putative chemokine-related protein B42 (Homo sapiens (Human)).